We begin with the raw amino-acid sequence, 232 residues long: Orotidine 5'-phosphate decarboxylase (232 aa).

Substrate-binding positions include D13, K35, D62–T71, T121, R182, Q191, G211, and R212. Residue K64 is the Proton donor of the active site.

The protein belongs to the OMP decarboxylase family. Type 1 subfamily. Homodimer.

The enzyme catalyses orotidine 5'-phosphate + H(+) = UMP + CO2. The protein operates within pyrimidine metabolism; UMP biosynthesis via de novo pathway; UMP from orotate: step 2/2. Catalyzes the decarboxylation of orotidine 5'-monophosphate (OMP) to uridine 5'-monophosphate (UMP). The protein is Orotidine 5'-phosphate decarboxylase of Teredinibacter turnerae (strain ATCC 39867 / T7901).